Consider the following 911-residue polypeptide: DNA replication licensing factor mcm4 (911 aa).

Positions 1-132 (MSSSQQSGRA…RPGVSTPSSL (132 aa)) are disordered. Phosphoserine is present on residues serine 37, serine 38, and serine 41. The span at 42-56 (TRLTTPRTTARTPLA) shows a compositional bias: low complexity. The segment covering 63–84 (ESSSPGPNIPQSSRSHLLSQRN) has biased composition (polar residues). Serine 92 is subject to Phosphoserine. Positions 493-702 (IYDILSRSLA…LDRKLANHIV (210 aa)) constitute an MCM domain. 545-552 (GDPSTSKS) serves as a coordination point for ATP. Positions 677–680 (SRFD) match the Arginine finger motif.

Belongs to the MCM family. As to quaternary structure, component of the mcm2-7 complex. The complex forms a toroidal hexameric ring with the proposed subunit order mcm2-mcm6-mcm4-mcm7-mcm3-mcm5. The heterodimers of mcm4/mcm6 and mcm3/mcm5 interact with mcm2 and mcm7.

It localises to the nucleus. The catalysed reaction is ATP + H2O = ADP + phosphate + H(+). Acts as a component of the mcm2-7 complex (mcm complex) which is the putative replicative helicase essential for 'once per cell cycle' DNA replication initiation and elongation in eukaryotic cells. The active ATPase sites in the mcm2-7 ring are formed through the interaction surfaces of two neighboring subunits such that a critical structure of a conserved arginine finger motif is provided in trans relative to the ATP-binding site of the Walker A box of the adjacent subunit. The six ATPase active sites, however, are likely to contribute differentially to the complex helicase activity. Required for S phase execution. This chain is DNA replication licensing factor mcm4 (mcm4), found in Schizosaccharomyces pombe (strain 972 / ATCC 24843) (Fission yeast).